The primary structure comprises 812 residues: Valine--tRNA ligase (812 aa).

Residues 46–56 (PTVSGQLHIGH) carry the 'HIGH' region motif. The short motif at 536–540 (KMSKS) is the 'KMSKS' region element. Lys539 is a binding site for ATP.

Belongs to the class-I aminoacyl-tRNA synthetase family. ValS type 2 subfamily. In terms of assembly, monomer.

It is found in the cytoplasm. The catalysed reaction is tRNA(Val) + L-valine + ATP = L-valyl-tRNA(Val) + AMP + diphosphate. Functionally, catalyzes the attachment of valine to tRNA(Val). As ValRS can inadvertently accommodate and process structurally similar amino acids such as threonine, to avoid such errors, it has a 'posttransfer' editing activity that hydrolyzes mischarged Thr-tRNA(Val) in a tRNA-dependent manner. The chain is Valine--tRNA ligase from Rickettsia rickettsii (strain Iowa).